Here is a 103-residue protein sequence, read N- to C-terminus: Integration host factor subunit alpha (103 aa).

The interval 55–74 is disordered; that stretch reads CREKPQRPGRNPKTGEEMPI.

This sequence belongs to the bacterial histone-like protein family. As to quaternary structure, heterodimer of an alpha and a beta chain.

In terms of biological role, this protein is one of the two subunits of integration host factor, a specific DNA-binding protein that functions in genetic recombination as well as in transcriptional and translational control. The chain is Integration host factor subunit alpha from Thiobacillus denitrificans (strain ATCC 25259 / T1).